A 144-amino-acid polypeptide reads, in one-letter code: Large ribosomal subunit protein uL15 (144 aa).

Positions 1-48 (MQLNNLKPADGSKHAKRRVGRGIGSGLGKTAGRGHKGQKSRSGGFHKV) are disordered. Over residues 21–31 (RGIGSGLGKTA) the composition is skewed to gly residues.

The protein belongs to the universal ribosomal protein uL15 family. In terms of assembly, part of the 50S ribosomal subunit.

Functionally, binds to the 23S rRNA. This Cupriavidus metallidurans (strain ATCC 43123 / DSM 2839 / NBRC 102507 / CH34) (Ralstonia metallidurans) protein is Large ribosomal subunit protein uL15.